The sequence spans 85 residues: UPF0291 protein SEQ_0545 (85 aa).

The disordered stretch occupies residues 62 to 85 (TPEKLRQVQREKGLHGRSLDDPES).

It belongs to the UPF0291 family.

The protein resides in the cytoplasm. In Streptococcus equi subsp. equi (strain 4047), this protein is UPF0291 protein SEQ_0545.